The chain runs to 563 residues: MSETINTGAQFPTFEKPTVQFNEKGWGPCELPDTFKDVPYQPFSKNDRLGKICDWTSTSNNDKKYQNKYASTFGTGNQYAYYHEEDETTFHLVDTARVQKPPHQRGRFRNMRNSRSGRGRNARGGLNTHGHGMTTLNSKNVKARDTRRGVGKRFGHRGPPPKMRESSVAVRADWASIEEMDFPRLIKLSLPNIKEGEDIATCGTLEYYDKTYDRINVKNEKPLQKIDRIVHTVTTTDDPVIRRLSKTVGNVFATDAILATIMCSTRSNYSWDIVIEKVGEKIFMDKRDHTEFDLLTVNESSVEPPTDDDSSCNSPRNLAIEATFINHNFSQQVLKTGDQEAKYKFEETNPFISEDEDIQVASVGYRYKKWELGSDIVLVARCEHDGVLQTPSGEPQFLSIKALNEWDSKLANGVEWRQKLDTQRGAVLANELRNNACKLAKWTVQAVLAGSDQLKLGYVSRINPRDHSRHVILGTQQFKPHEFATQINLSMDNAWGILRCIIDLVMKQKDGKYLIMKDPNKPIIRLYDIPDNTFDSDDSDDGEGDDGEAFQQVYNYANNSNKI.

The tract at residues 98–167 (VQKPPHQRGR…GPPPKMRESS (70 aa)) is disordered. The span at 100 to 121 (KPPHQRGRFRNMRNSRSGRGRN) shows a compositional bias: basic residues. The residue at position 128 (threonine 128) is a Phosphothreonine. The segment at 291–305 (EFDLLTVNESSVEPP) is RNA gate.

It belongs to the eIF-3 subunit D family. As to quaternary structure, component of the eukaryotic translation initiation factor 3 (eIF-3) complex. The eIF-3 complex interacts with pix.

It localises to the cytoplasm. MRNA cap-binding component of the eukaryotic translation initiation factor 3 (eIF-3) complex, which is involved in protein synthesis of a specialized repertoire of mRNAs and, together with other initiation factors, stimulates binding of mRNA and methionyl-tRNAi to the 40S ribosome. The eIF-3 complex specifically targets and initiates translation of a subset of mRNAs involved in cell proliferation. In the eIF-3 complex, eif3d specifically recognizes and binds the 7-methylguanosine cap of a subset of mRNAs. The polypeptide is Eukaryotic translation initiation factor 3 subunit D-1 (Drosophila grimshawi (Hawaiian fruit fly)).